The following is a 379-amino-acid chain: Chaperone protein DnaJ (379 aa).

The J domain occupies 5-70 (DYYEILEVSR…EKRAAYDRYG (66 aa)). Residues 135-213 (GIKVPISYVT…CGGSGRVRNE (79 aa)) form a CR-type zinc finger. Zn(2+) contacts are provided by Cys-148, Cys-151, Cys-165, Cys-168, Cys-187, Cys-190, Cys-201, and Cys-204. 4 CXXCXGXG motif repeats span residues 148-155 (CSSCSGIG), 165-172 (CGNCNGAG), 187-194 (CNVCNGEG), and 201-208 (CRRCGGSG).

Belongs to the DnaJ family. In terms of assembly, homodimer. It depends on Zn(2+) as a cofactor.

The protein resides in the cytoplasm. Its function is as follows. Participates actively in the response to hyperosmotic and heat shock by preventing the aggregation of stress-denatured proteins and by disaggregating proteins, also in an autonomous, DnaK-independent fashion. Unfolded proteins bind initially to DnaJ; upon interaction with the DnaJ-bound protein, DnaK hydrolyzes its bound ATP, resulting in the formation of a stable complex. GrpE releases ADP from DnaK; ATP binding to DnaK triggers the release of the substrate protein, thus completing the reaction cycle. Several rounds of ATP-dependent interactions between DnaJ, DnaK and GrpE are required for fully efficient folding. Also involved, together with DnaK and GrpE, in the DNA replication of plasmids through activation of initiation proteins. The sequence is that of Chaperone protein DnaJ from Anaplasma marginale (strain Florida).